A 259-amino-acid polypeptide reads, in one-letter code: Insulin-induced gene 1 protein (259 aa).

Residues 1-66 (MPRLHDHVWS…ARPGSWHHDL (66 aa)) are Cytoplasmic-facing. The segment at 33–57 (PQGPGAPEPEPAPRGQREGTAGFSA) is disordered. A helical membrane pass occupies residues 67 to 89 (VQRSLVLFSFGVVLALVLNLLQI). At 90-108 (QRNVTLFPDEVIATIFSSA) the chain is on the extracellular side. The helical transmembrane segment at 109-126 (WWVPPCCGTAAAVVGLLY) threads the bilayer. Over 127–141 (PCIDSHLGEPHKFKR) the chain is Cytoplasmic. Glycyl lysine isopeptide (Lys-Gly) (interchain with G-Cter in ubiquitin) cross-links involve residues K138 and K140. A helical transmembrane segment spans residues 142–164 (EWASVMRCIAVFVGINHASAKLD). Residues 165 to 167 (FAN) are Extracellular-facing. Residues 168-186 (NVQLSLTLAALSLGLWWTF) form a helical membrane-spanning segment. The Cytoplasmic portion of the chain corresponds to 187–191 (DRSRS). S189 carries the post-translational modification Phosphoserine. Residues 192 to 213 (GLGLGITIAFLATLITQFLVYN) form a helical membrane-spanning segment. At 214 to 227 (GVYQYTSPDFLYIR) the chain is on the extracellular side. The helical transmembrane segment at 228–245 (SWLPCIFFSGGVTVGNIG) threads the bilayer. The Cytoplasmic segment spans residues 246–259 (RQLAMGVPEKPHSD). The short motif at 253–259 (PEKPHSD) is the KxHxx element.

It belongs to the INSIG family. As to quaternary structure, interacts with SCAP; interaction is direct and only takes place in the presence of sterols; it prevents interaction between SCAP and the coat protein complex II (COPII). Associates with the SCAP-SREBP complex (composed of SCAP and SREBF1/SREBP1 or SREBF2/SREBP2); association is mediated via its interaction with SCAP and only takes place in the presence of sterols. Interaction with SCAP is mutually exclusive with PAQR3. Interacts with HMGCR (via its SSD); the interaction, accelerated by sterols, leads to the recruitment of HMGCR to AMFR/gp78 for its ubiquitination by the sterol-mediated ERAD pathway. Interacts with AMFR/gp78 (via its membrane domain); the interaction recruits HMCR at the ER membrane for its ubiquitination and degradation by the sterol-mediated ERAD pathway. Interacts with SOAT2/ACAT2; leading to promote recruitment of AMFR/gp78 and subsequent ubiquitination of SOAT2/ACAT2. Interacts with RNF139. Interacts with RNF145. Phosphorylation at Ser-189 by PCK1 reduces binding to oxysterol, disrupting the interaction between INSIG1 and SCAP, thereby promoting nuclear translocation of SREBP proteins (SREBF1/SREBP1 or SREBF2/SREBP2) and subsequent transcription of downstream lipogenesis-related genes. Post-translationally, ubiquitinated by AMFR/gp78 in response to sterol deprivation, leading to its degradation: when the SCAP-SREBP complex becomes dissociated from INSIG1, INSIG1 is then ubiquitinated and degraded in proteasomes. Although ubiquitination is required for rapid INSIG1 degradation, it is not required for release of the SCAP-SREBP complex. Ubiquitinated by RNF139. Highly expressed in liver and kidney.

The protein resides in the endoplasmic reticulum membrane. Its function is as follows. Oxysterol-binding protein that mediates feedback control of cholesterol synthesis by controlling both endoplasmic reticulum to Golgi transport of SCAP and degradation of HMGCR. Acts as a negative regulator of cholesterol biosynthesis by mediating the retention of the SCAP-SREBP complex in the endoplasmic reticulum, thereby blocking the processing of sterol regulatory element-binding proteins (SREBPs) SREBF1/SREBP1 and SREBF2/SREBP2. Binds oxysterol, including 25-hydroxycholesterol, regulating interaction with SCAP and retention of the SCAP-SREBP complex in the endoplasmic reticulum. In presence of oxysterol, interacts with SCAP, retaining the SCAP-SREBP complex in the endoplasmic reticulum, thereby preventing SCAP from escorting SREBF1/SREBP1 and SREBF2/SREBP2 to the Golgi. Sterol deprivation or phosphorylation by PCK1 reduce oxysterol-binding, disrupting the interaction between INSIG1 and SCAP, thereby promoting Golgi transport of the SCAP-SREBP complex, followed by processing and nuclear translocation of SREBF1/SREBP1 and SREBF2/SREBP2. Also regulates cholesterol synthesis by regulating degradation of HMGCR: initiates the sterol-mediated ubiquitin-mediated endoplasmic reticulum-associated degradation (ERAD) of HMGCR via recruitment of the reductase to the ubiquitin ligases AMFR/gp78 and/or RNF139. Also regulates degradation of SOAT2/ACAT2 when the lipid levels are low: initiates the ubiquitin-mediated degradation of SOAT2/ACAT2 via recruitment of the ubiquitin ligases AMFR/gp78. This chain is Insulin-induced gene 1 protein, found in Rattus norvegicus (Rat).